A 542-amino-acid chain; its full sequence is Putative selenium-binding protein (542 aa).

The protein belongs to the selenium-binding protein family.

The protein is Putative selenium-binding protein of Caenorhabditis elegans.